We begin with the raw amino-acid sequence, 141 residues long: Hemoglobin subunit alpha (141 aa).

The 141-residue stretch at 1–141 (VLSPGDKSNI…VSTVLTSKYR (141 aa)) folds into the Globin domain. Serine 3 is subject to Phosphoserine. Residues lysine 7 and lysine 11 each carry the N6-succinyllysine modification. Lysine 16 carries the post-translational modification N6-acetyllysine; alternate. An N6-succinyllysine; alternate modification is found at lysine 16. Residue tyrosine 24 is modified to Phosphotyrosine. Phosphoserine is present on serine 35. Lysine 40 is modified (N6-succinyllysine). Residue serine 49 is modified to Phosphoserine. Histidine 58 is an O2 binding site. Histidine 87 contacts heme b. The residue at position 102 (serine 102) is a Phosphoserine. The residue at position 108 (threonine 108) is a Phosphothreonine. Phosphoserine is present on serine 124. A phosphothreonine mark is found at threonine 134 and threonine 137. Serine 138 is subject to Phosphoserine.

Belongs to the globin family. As to quaternary structure, heterotetramer of two alpha chains and two beta chains. In terms of tissue distribution, red blood cells.

Involved in oxygen transport from the lung to the various peripheral tissues. Its function is as follows. Hemopressin acts as an antagonist peptide of the cannabinoid receptor CNR1. Hemopressin-binding efficiently blocks cannabinoid receptor CNR1 and subsequent signaling. The polypeptide is Hemoglobin subunit alpha (HBA) (Tupaia glis (Common tree shrew)).